A 291-amino-acid polypeptide reads, in one-letter code: Ribosomal RNA small subunit methyltransferase H (291 aa).

Residues 31-33 (GGY), D49, F76, D97, and Q104 each bind S-adenosyl-L-methionine.

Belongs to the methyltransferase superfamily. RsmH family.

It is found in the cytoplasm. It catalyses the reaction cytidine(1402) in 16S rRNA + S-adenosyl-L-methionine = N(4)-methylcytidine(1402) in 16S rRNA + S-adenosyl-L-homocysteine + H(+). Specifically methylates the N4 position of cytidine in position 1402 (C1402) of 16S rRNA. This Anaplasma marginale (strain St. Maries) protein is Ribosomal RNA small subunit methyltransferase H.